The chain runs to 592 residues: A-type ATP synthase subunit A (592 aa).

234–241 serves as a coordination point for ATP; the sequence is GAFGTGKT.

It belongs to the ATPase alpha/beta chains family. Has multiple subunits with at least A(3), B(3), C, D, E, F, H, I and proteolipid K(x).

It is found in the cell membrane. It catalyses the reaction ATP + H2O + 4 H(+)(in) = ADP + phosphate + 5 H(+)(out). Its function is as follows. Component of the A-type ATP synthase that produces ATP from ADP in the presence of a proton gradient across the membrane. The A chain is the catalytic subunit. In Nitrosopumilus maritimus (strain SCM1), this protein is A-type ATP synthase subunit A.